Reading from the N-terminus, the 410-residue chain is ATP phosphoribosyltransferase regulatory subunit (410 aa).

It belongs to the class-II aminoacyl-tRNA synthetase family. HisZ subfamily. In terms of assembly, heteromultimer composed of HisG and HisZ subunits.

The protein localises to the cytoplasm. The protein operates within amino-acid biosynthesis; L-histidine biosynthesis; L-histidine from 5-phospho-alpha-D-ribose 1-diphosphate: step 1/9. Its function is as follows. Required for the first step of histidine biosynthesis. May allow the feedback regulation of ATP phosphoribosyltransferase activity by histidine. This Synechococcus sp. (strain JA-3-3Ab) (Cyanobacteria bacterium Yellowstone A-Prime) protein is ATP phosphoribosyltransferase regulatory subunit.